Consider the following 216-residue polypeptide: Small ribosomal subunit protein uS5 (216 aa).

The disordered stretch occupies residues 1 to 55; it reads MDKKLENQKDLLNQDPKVELNSQSVAKNPLNSREVKPIQRRRPLRKNARDKNSKP. Residues 20–31 are compositionally biased toward polar residues; sequence LNSQSVAKNPLN. The S5 DRBM domain maps to 57–120; sequence FEERVIAIHR…KDAQNRLVSV (64 aa).

Belongs to the universal ribosomal protein uS5 family. In terms of assembly, part of the 30S ribosomal subunit. Contacts proteins S4 and S8.

Its function is as follows. With S4 and S12 plays an important role in translational accuracy. Located at the back of the 30S subunit body where it stabilizes the conformation of the head with respect to the body. This Mesomycoplasma hyopneumoniae (strain 7448) (Mycoplasma hyopneumoniae) protein is Small ribosomal subunit protein uS5.